We begin with the raw amino-acid sequence, 245 residues long: Triosephosphate isomerase (245 aa).

Substrate is bound at residue 9-11; that stretch reads NWK. His92 acts as the Electrophile in catalysis. Glu164 serves as the catalytic Proton acceptor. Substrate is bound by residues Gly170, Ser209, and 230-231; that span reads GG.

The protein belongs to the triosephosphate isomerase family. In terms of assembly, homodimer.

The protein resides in the cytoplasm. The enzyme catalyses D-glyceraldehyde 3-phosphate = dihydroxyacetone phosphate. Its pathway is carbohydrate biosynthesis; gluconeogenesis. It participates in carbohydrate degradation; glycolysis; D-glyceraldehyde 3-phosphate from glycerone phosphate: step 1/1. In terms of biological role, involved in the gluconeogenesis. Catalyzes stereospecifically the conversion of dihydroxyacetone phosphate (DHAP) to D-glyceraldehyde-3-phosphate (G3P). In Cupriavidus necator (strain ATCC 17699 / DSM 428 / KCTC 22496 / NCIMB 10442 / H16 / Stanier 337) (Ralstonia eutropha), this protein is Triosephosphate isomerase.